A 396-amino-acid polypeptide reads, in one-letter code: 1-deoxy-D-xylulose 5-phosphate reductoisomerase (396 aa).

The NADPH site is built by T10, G11, S12, I13, G36, K37, N38, and N124. Residue K125 participates in 1-deoxy-D-xylulose 5-phosphate binding. NADPH is bound at residue E126. D150 is a Mn(2+) binding site. Residues S151, E152, S186, and H209 each contribute to the 1-deoxy-D-xylulose 5-phosphate site. E152 serves as a coordination point for Mn(2+). G215 provides a ligand contact to NADPH. Residues S222, N227, K228, and E231 each coordinate 1-deoxy-D-xylulose 5-phosphate. E231 contacts Mn(2+).

It belongs to the DXR family. Mg(2+) serves as cofactor. Mn(2+) is required as a cofactor.

The enzyme catalyses 2-C-methyl-D-erythritol 4-phosphate + NADP(+) = 1-deoxy-D-xylulose 5-phosphate + NADPH + H(+). It functions in the pathway isoprenoid biosynthesis; isopentenyl diphosphate biosynthesis via DXP pathway; isopentenyl diphosphate from 1-deoxy-D-xylulose 5-phosphate: step 1/6. Functionally, catalyzes the NADPH-dependent rearrangement and reduction of 1-deoxy-D-xylulose-5-phosphate (DXP) to 2-C-methyl-D-erythritol 4-phosphate (MEP). The polypeptide is 1-deoxy-D-xylulose 5-phosphate reductoisomerase (Actinobacillus pleuropneumoniae serotype 5b (strain L20)).